The following is a 78-amino-acid chain: Acyl carrier protein (78 aa).

In terms of domain architecture, Carrier spans 2-77 (SDIASRVKAI…QAISYIEEAK (76 aa)). S37 is subject to O-(pantetheine 4'-phosphoryl)serine.

The protein belongs to the acyl carrier protein (ACP) family. 4'-phosphopantetheine is transferred from CoA to a specific serine of apo-ACP by AcpS. This modification is essential for activity because fatty acids are bound in thioester linkage to the sulfhydryl of the prosthetic group.

Its subcellular location is the cytoplasm. It participates in lipid metabolism; fatty acid biosynthesis. Functionally, carrier of the growing fatty acid chain in fatty acid biosynthesis. The polypeptide is Acyl carrier protein (Flavobacterium johnsoniae (strain ATCC 17061 / DSM 2064 / JCM 8514 / BCRC 14874 / CCUG 350202 / NBRC 14942 / NCIMB 11054 / UW101) (Cytophaga johnsonae)).